Here is a 353-residue protein sequence, read N- to C-terminus: Methionine import ATP-binding protein MetN (353 aa).

The region spanning 11-251 (ITFDRVEKSF…PEHPTTRSFL (241 aa)) is the ABC transporter domain. 48–55 (GRSGAGKS) is an ATP binding site.

It belongs to the ABC transporter superfamily. Methionine importer (TC 3.A.1.24) family. The complex is composed of two ATP-binding proteins (MetN), two transmembrane proteins (MetI) and a solute-binding protein (MetQ).

Its subcellular location is the cell inner membrane. The catalysed reaction is L-methionine(out) + ATP + H2O = L-methionine(in) + ADP + phosphate + H(+). The enzyme catalyses D-methionine(out) + ATP + H2O = D-methionine(in) + ADP + phosphate + H(+). Its function is as follows. Part of the ABC transporter complex MetNIQ involved in methionine import. Responsible for energy coupling to the transport system. The protein is Methionine import ATP-binding protein MetN of Cereibacter sphaeroides (strain ATCC 17023 / DSM 158 / JCM 6121 / CCUG 31486 / LMG 2827 / NBRC 12203 / NCIMB 8253 / ATH 2.4.1.) (Rhodobacter sphaeroides).